A 418-amino-acid chain; its full sequence is Actin-related protein 3 (418 aa).

At A2 the chain carries N-acetylalanine.

Belongs to the actin family. ARP3 subfamily. Component of the Arp2/3 complex composed of ACTR2/ARP2, ACTR3/ARP3, ARPC1B/p41-ARC, ARPC2/p34-ARC, ARPC3/p21-ARC, ARPC4/p20-ARC and ARPC5/p16-ARC. As to expression, detected in fibroblasts.

The protein localises to the cytoplasm. It is found in the cytoskeleton. Its subcellular location is the cell projection. The protein resides in the nucleus. Its function is as follows. ATP-binding component of the Arp2/3 complex, a multiprotein complex that mediates actin polymerization upon stimulation by nucleation-promoting factor (NPF). The Arp2/3 complex mediates the formation of branched actin networks in the cytoplasm, providing the force for cell motility. Seems to contact the pointed end of the daughter actin filament. In addition to its role in the cytoplasmic cytoskeleton, the Arp2/3 complex also promotes actin polymerization in the nucleus, thereby regulating gene transcription and repair of damaged DNA. The Arp2/3 complex promotes homologous recombination (HR) repair in response to DNA damage by promoting nuclear actin polymerization, leading to drive motility of double-strand breaks (DSBs). The protein is Actin-related protein 3 (ACTR3) of Gallus gallus (Chicken).